We begin with the raw amino-acid sequence, 375 residues long: OVARIAN TUMOR DOMAIN-containing deubiquitinating enzyme 7 (375 aa).

The segment covering 1-18 has biased composition (basic residues); the sequence is MAKTKQQKSKPKKQPHQK. The disordered stretch occupies residues 1 to 23; it reads MAKTKQQKSKPKKQPHQKQGKDC. Residues 37-161 form the OTU domain; the sequence is LKIIQVTADG…GEHYNSVRSK (125 aa). The active site involves aspartate 45. Cysteine 48 serves as the catalytic Nucleophile. Residue histidine 154 is part of the active site. A UBA-like domain is found at 202–250; the sequence is HVNAGAIKVVMSGSCCDNTEKAEQVLLQVNGDVDAAIEFLIADQGMESL. Polar residues-rich tracts occupy residues 251–264 and 290–305; these read TEND…SDTI and ASGN…CTTQ. Residues 251–306 form a disordered region; the sequence is TENDTETASASDTINPKHASDSPMENTEQAREELIEEESASGNNSETVQAKCTTQT. The short motif at 308-315 is the Nuclear localization signal element; the sequence is DKKIPRNK.

This sequence belongs to the peptidase C85 family.

The protein localises to the nucleus. It carries out the reaction Thiol-dependent hydrolysis of ester, thioester, amide, peptide and isopeptide bonds formed by the C-terminal Gly of ubiquitin (a 76-residue protein attached to proteins as an intracellular targeting signal).. Hydrolase that can remove conjugated ubiquitin from proteins in vitro and may therefore play an important regulatory role at the level of protein turnover by preventing degradation. Cysteine protease with a preference for 'Lys-63' over 'Lys-48' over 'Met-1' -linked ubiquitin (UB) tetramers as substrates. Also cleaves RUB-GST fusion. The sequence is that of OVARIAN TUMOR DOMAIN-containing deubiquitinating enzyme 7 from Arabidopsis thaliana (Mouse-ear cress).